The sequence spans 672 residues: Beta-galactosidase GanA (672 aa).

Arg105 lines the substrate pocket. Cys109 is a Zn(2+) binding site. Asn143 is a binding site for substrate. The Proton donor role is filled by Glu144. Positions 149, 151, and 154 each coordinate Zn(2+). Glu308 (nucleophile) is an active-site residue. Residues Trp316 and 356-359 each bind substrate; that span reads EKLH.

The protein belongs to the glycosyl hydrolase 42 family. Homotrimer.

It carries out the reaction Hydrolysis of terminal non-reducing beta-D-galactose residues in beta-D-galactosides.. Its activity is regulated as follows. Inhibited by zinc, cobalt and copper ions. Functionally, involved in galactan degradation. Hydrolyzes galactooligosaccharides released by the endo-beta-1,4-galactanase GanB from galactan. Degrades galactotetraose, galactotriose and galactobiose, generating galactose as the end product. It is unable to use lactose. In vitro, shows maximal activity with o-nitrophenyl-beta-D-galactopyranoside (ONPG) and p-nitrophenyl-beta-D-galactopyranoside (PNPG) as substrates, trace activity with p-nitrophenyl-alpha-L-arabinopyranoside and o-nitrophenyl-beta-D-fucopyranoside as substrates, but no activity with p-nitrophenyl-alpha-D-galactopyranoside, p-nitrophenyl-beta-D-glucopyranoside, o-nitrophenyl-beta-D-xylopyranoside, p-nitrophenyl-beta-D-mannopyranoside or p-nitrophenyl-alpha-L-arabinofuranoside as substrates. This Bacillus subtilis (strain 168) protein is Beta-galactosidase GanA.